A 559-amino-acid chain; its full sequence is Small ribosomal subunit protein bS1 (559 aa).

S1 motif domains follow at residues 21–87 (GAII…LSRE), 105–171 (DEVV…VSRR), 192–260 (GQQV…LGLK), 277–347 (GTRV…LGIK), 364–434 (GDRI…LGIK), and 451–520 (GSIV…LSVK).

This sequence belongs to the bacterial ribosomal protein bS1 family.

Binds mRNA; thus facilitating recognition of the initiation point. It is needed to translate mRNA with a short Shine-Dalgarno (SD) purine-rich sequence. This is Small ribosomal subunit protein bS1 (rpsA) from Pseudomonas aeruginosa (strain ATCC 15692 / DSM 22644 / CIP 104116 / JCM 14847 / LMG 12228 / 1C / PRS 101 / PAO1).